Here is an 87-residue protein sequence, read N- to C-terminus: DNA-directed RNA polymerase subunit omega (87 aa).

The protein belongs to the RNA polymerase subunit omega family. In terms of assembly, the RNAP catalytic core consists of 2 alpha, 1 beta, 1 beta' and 1 omega subunit. When a sigma factor is associated with the core the holoenzyme is formed, which can initiate transcription.

The catalysed reaction is RNA(n) + a ribonucleoside 5'-triphosphate = RNA(n+1) + diphosphate. Its function is as follows. Promotes RNA polymerase assembly. Latches the N- and C-terminal regions of the beta' subunit thereby facilitating its interaction with the beta and alpha subunits. In Ectopseudomonas mendocina (strain ymp) (Pseudomonas mendocina), this protein is DNA-directed RNA polymerase subunit omega.